The primary structure comprises 178 residues: ATP-dependent protease subunit HslV (178 aa).

Residue T7 is part of the active site. The Na(+) site is built by G162, C165, and T168.

It belongs to the peptidase T1B family. HslV subfamily. A double ring-shaped homohexamer of HslV is capped on each side by a ring-shaped HslU homohexamer. The assembly of the HslU/HslV complex is dependent on binding of ATP.

The protein resides in the cytoplasm. It carries out the reaction ATP-dependent cleavage of peptide bonds with broad specificity.. With respect to regulation, allosterically activated by HslU binding. In terms of biological role, protease subunit of a proteasome-like degradation complex believed to be a general protein degrading machinery. In Paraburkholderia phymatum (strain DSM 17167 / CIP 108236 / LMG 21445 / STM815) (Burkholderia phymatum), this protein is ATP-dependent protease subunit HslV.